The primary structure comprises 498 residues: ATP synthase subunit beta, chloroplastic (498 aa).

172 to 179 is a binding site for ATP; that stretch reads GGAGVGKT.

This sequence belongs to the ATPase alpha/beta chains family. In terms of assembly, F-type ATPases have 2 components, CF(1) - the catalytic core - and CF(0) - the membrane proton channel. CF(1) has five subunits: alpha(3), beta(3), gamma(1), delta(1), epsilon(1). CF(0) has four main subunits: a(1), b(1), b'(1) and c(9-12).

Its subcellular location is the plastid. It localises to the chloroplast thylakoid membrane. The enzyme catalyses ATP + H2O + 4 H(+)(in) = ADP + phosphate + 5 H(+)(out). Its function is as follows. Produces ATP from ADP in the presence of a proton gradient across the membrane. The catalytic sites are hosted primarily by the beta subunits. The polypeptide is ATP synthase subunit beta, chloroplastic (Spinacia oleracea (Spinach)).